We begin with the raw amino-acid sequence, 547 residues long: Glucose-6-phosphate isomerase (547 aa).

The active-site Proton donor is E352. Residues H383 and K511 contribute to the active site.

This sequence belongs to the GPI family.

It localises to the cytoplasm. The catalysed reaction is alpha-D-glucose 6-phosphate = beta-D-fructose 6-phosphate. The protein operates within carbohydrate biosynthesis; gluconeogenesis. Its pathway is carbohydrate degradation; glycolysis; D-glyceraldehyde 3-phosphate and glycerone phosphate from D-glucose: step 2/4. In terms of biological role, catalyzes the reversible isomerization of glucose-6-phosphate to fructose-6-phosphate. This chain is Glucose-6-phosphate isomerase, found in Magnetococcus marinus (strain ATCC BAA-1437 / JCM 17883 / MC-1).